The primary structure comprises 513 residues: Na(+)/H(+) antiporter NhaB (513 aa).

A run of 11 helical transmembrane segments spans residues 21–41 (ITIV…SPFI), 88–108 (IIAN…IYFM), 119–139 (LLLS…SAAF), 143–163 (FLDA…FYGV), 208–228 (VGTA…LIIA), 247–267 (LPVL…GVFG), 303–323 (ALIG…VGII), 357–377 (LVVF…APII), 389–409 (LALF…VFVA), 447–467 (ATPN…APLI), and 477–497 (MALP…EYIL).

The protein belongs to the NhaB Na(+)/H(+) (TC 2.A.34) antiporter family.

It is found in the cell inner membrane. It carries out the reaction 2 Na(+)(in) + 3 H(+)(out) = 2 Na(+)(out) + 3 H(+)(in). Functionally, na(+)/H(+) antiporter that extrudes sodium in exchange for external protons. This chain is Na(+)/H(+) antiporter NhaB, found in Pasteurella multocida (strain Pm70).